The chain runs to 250 residues: Testis-expressed protein 101 (250 aa).

The N-terminal stretch at 1 to 25 (MGACRIQYILLVFLLIASHWTLVQN) is a signal peptide. N-linked (GlcNAc...) asparagine glycosylation is found at Asn-45, Asn-110, Asn-134, and Asn-160. The region spanning 141–215 (CPTCLALEPC…VKETCSYQSF (75 aa)) is the UPAR/Ly6 domain. A lipid anchor (GPI-anchor amidated glycine) is attached at Gly-224. The propeptide at 225–250 (ASWMPTSLWVLELLLPALSLPLIYFP) is removed in mature form.

Interacts with VAMP3. Interacts with LY6K. Interacts with DPEP3; co-localized on the cell surface of spermatocytes, spermatids, and testicular spermatozoa, co-localized only in cytoplasmic droplets of caput and corpus epididymal sperm. Interacts with ADAM5. N-glycosylated; by high mannose and/or biantennary complex and/or certain types of hybrid oligosaccharides; possesses different oligosaccharides chains according to its subcellular localization in the testis. In terms of processing, sheds from membrane raft by ACE and released from the cell surface of epididymal sperm while it passes through the caput epididymis leading to disappearance of TEX101 on spermatozoa; is essential to produce fertile spermatozoa. Detected in testis.

The protein localises to the cell membrane. It localises to the membrane raft. The protein resides in the cytoplasmic vesicle. It is found in the secretory vesicle. Its subcellular location is the acrosome. The protein localises to the secreted. In terms of biological role, plays a role in fertilization by controlling binding of sperm to zona pellucida and migration of spermatozoa into the oviduct. May play a role in signal transduction and promote protein tyrosine phosphorylation. In Rattus norvegicus (Rat), this protein is Testis-expressed protein 101.